Consider the following 75-residue polypeptide: Small ribosomal subunit protein bS18 (75 aa).

The protein belongs to the bacterial ribosomal protein bS18 family. Part of the 30S ribosomal subunit. Forms a tight heterodimer with protein bS6.

Binds as a heterodimer with protein bS6 to the central domain of the 16S rRNA, where it helps stabilize the platform of the 30S subunit. This is Small ribosomal subunit protein bS18 from Buchnera aphidicola subsp. Cinara cedri (strain Cc).